Consider the following 376-residue polypeptide: Chaperone protein DnaJ (376 aa).

The 66-residue stretch at 5 to 70 (DYYEILGVSK…QKRAAYDQYG (66 aa)) folds into the J domain. The segment at 131-209 (GVTKEIRIPT…CHGHGRVERS (79 aa)) adopts a CR-type zinc-finger fold. Zn(2+)-binding residues include Cys144, Cys147, Cys161, Cys164, Cys183, Cys186, Cys197, and Cys200. 4 CXXCXGXG motif repeats span residues 144-151 (CDVCHGSG), 161-168 (CPTCHGSG), 183-190 (CPHCQGRG), and 197-204 (CNKCHGHG).

Belongs to the DnaJ family. In terms of assembly, homodimer. The cofactor is Zn(2+).

It is found in the cytoplasm. Participates actively in the response to hyperosmotic and heat shock by preventing the aggregation of stress-denatured proteins and by disaggregating proteins, also in an autonomous, DnaK-independent fashion. Unfolded proteins bind initially to DnaJ; upon interaction with the DnaJ-bound protein, DnaK hydrolyzes its bound ATP, resulting in the formation of a stable complex. GrpE releases ADP from DnaK; ATP binding to DnaK triggers the release of the substrate protein, thus completing the reaction cycle. Several rounds of ATP-dependent interactions between DnaJ, DnaK and GrpE are required for fully efficient folding. Also involved, together with DnaK and GrpE, in the DNA replication of plasmids through activation of initiation proteins. The sequence is that of Chaperone protein DnaJ from Shigella flexneri serotype 5b (strain 8401).